A 342-amino-acid polypeptide reads, in one-letter code: MSASASSLSAFNPKSLPLCVSRPASVSVLPPSLSFKLHSDHLVSIFASSALKCSSPAEYPSRFVRNVAVSSDFEVEEDDMFADGDDSAPVERNSFSPDLKLFVGNLSFNVDSAQLAQLFESAGNVEMVEVIYDKVTGRSRGFGFVTMSTAAEVEAAAQQFNGYEFEGRPLRVNAGPPPPKREESFSRGPRSGGYGSERGGGYGSERGGGYGSERGGGYGSERGGGYGSQRSGGGYGGSQRSSYGSGSGSGSGSGSGNRLYVGNLSWGVDDMALENLFNEQGKVVEARVIYDRDSGRSKGFGFVTLSSSQEVQKAINSLNGADLDGRQIRVSEAEARPPRGQF.

The transit peptide at 1 to 65 directs the protein to the chloroplast; it reads MSASASSLSA…PAEYPSRFVR (65 aa). Residues 99–177 enclose the RRM 1 domain; that stretch reads LKLFVGNLSF…RPLRVNAGPP (79 aa). Phosphoserine occurs at positions 107 and 204. Residues 167-255 form a disordered region; sequence GRPLRVNAGP…GSGSGSGSGS (89 aa). The interval 178–256 is linker (Gly-rich); it reads PPKREESFSR…SGSGSGSGSG (79 aa). Gly residues-rich tracts occupy residues 190–237 and 245–255; these read RSGG…GYGG and SGSGSGSGSGS. The 79-residue stretch at 257-335 folds into the RRM 2 domain; that stretch reads NRLYVGNLSW…RQIRVSEAEA (79 aa).

The protein resides in the plastid. It is found in the chloroplast. Stabilizes specific chloroplast mRNAs. Required for normal chloroplast development under cold stress conditions by stabilizing transcripts of numerous mRNAs under these conditions. In Arabidopsis thaliana (Mouse-ear cress), this protein is 29 kDa ribonucleoprotein, chloroplastic.